A 1522-amino-acid polypeptide reads, in one-letter code: Dicer-like protein 1 (1522 aa).

Residues 1–12 (MTWAGDVEEQDD) show a composition bias toward acidic residues. The interval 1–37 (MTWAGDVEEQDDYFSCSDVSTSGDRRKRAPQTVTQEE) is disordered. The Helicase ATP-binding domain maps to 76–258 (LFLRAKMQNT…EHVREAAREL (183 aa)). 89–96 (LDTGTGKT) is an ATP binding site. Residues 202 to 205 (DEAH) carry the DEAH box motif. The region spanning 408 to 576 (WLNLYYERTT…DVEQEKAELI (169 aa)) is the Helicase C-terminal domain. The region spanning 600 to 700 (SLSILSHFVA…LPTISKYLPA (101 aa)) is the Dicer dsRNA-binding fold domain. The region spanning 859-980 (PFWKWSPQSR…ICPEPLHISN (122 aa)) is the PAZ domain. RNase III domains are found at residues 995–1166 (IIHR…MQHH) and 1222–1373 (AHKI…VDSE). Glu1262, Asp1359, and Glu1362 together coordinate Mg(2+). The 70-residue stretch at 1409–1478 (TRLSRLLSIN…SHAALEKLEG (70 aa)) folds into the DRBM domain. Residues Cys1421, His1449, Cys1490, and Cys1492 each coordinate Zn(2+).

Belongs to the helicase family. Dicer subfamily. The cofactor is Mg(2+). Mn(2+) serves as cofactor.

Functionally, dicer-like endonuclease involved in cleaving double-stranded RNA in the RNA interference (RNAi) pathway. Produces 21 to 25 bp dsRNAs (siRNAs) which target the selective destruction of homologous RNAs leading to sequence-specific suppression of gene expression, called post-transcriptional gene silencing (PTGS). Part of a broad host defense response against viral infection and transposons. This is Dicer-like protein 1 (DCL1) from Phaeosphaeria nodorum (strain SN15 / ATCC MYA-4574 / FGSC 10173) (Glume blotch fungus).